The chain runs to 111 residues: Large ribosomal subunit protein uL24 (111 aa).

The protein belongs to the universal ribosomal protein uL24 family. In terms of assembly, part of the 50S ribosomal subunit.

One of two assembly initiator proteins, it binds directly to the 5'-end of the 23S rRNA, where it nucleates assembly of the 50S subunit. In terms of biological role, one of the proteins that surrounds the polypeptide exit tunnel on the outside of the subunit. The polypeptide is Large ribosomal subunit protein uL24 (Bifidobacterium animalis subsp. lactis (strain AD011)).